Here is a 120-residue protein sequence, read N- to C-terminus: Large ribosomal subunit protein uL18 (120 aa).

The segment covering 1-10 has biased composition (basic and acidic residues); sequence MKRTRTESVQ. Residues 1–24 form a disordered region; it reads MKRTRTESVQRRHSRIRRKVEGTP.

Belongs to the universal ribosomal protein uL18 family. Part of the 50S ribosomal subunit; part of the 5S rRNA/L5/L18/L25 subcomplex. Contacts the 5S and 23S rRNAs.

In terms of biological role, this is one of the proteins that bind and probably mediate the attachment of the 5S RNA into the large ribosomal subunit, where it forms part of the central protuberance. In Gloeothece citriformis (strain PCC 7424) (Cyanothece sp. (strain PCC 7424)), this protein is Large ribosomal subunit protein uL18.